Here is a 720-residue protein sequence, read N- to C-terminus: Neurochondrin (720 aa).

The protein belongs to the neurochondrin family.

The protein resides in the cytoplasm. Its subcellular location is the cytosol. It is found in the cell projection. The protein localises to the dendrite. It localises to the postsynapse. Probably involved in signal transduction, in the nervous system. Required for the spatial learning process. May also be involved in neurite outgrowth. The chain is Neurochondrin (ncdn) from Xenopus laevis (African clawed frog).